Reading from the N-terminus, the 328-residue chain is Phosphatidylglycerol--prolipoprotein diacylglyceryl transferase (328 aa).

Transmembrane regions (helical) follow at residues 15–35 (VIQG…ILIS), 57–77 (IFMF…STLV), and 106–126 (GMAI…TINT). Arginine 156 is an a 1,2-diacyl-sn-glycero-3-phospho-(1'-sn-glycerol) binding site. Transmembrane regions (helical) follow at residues 242–262 (GFIF…IEYL) and 289–309 (ISMG…WIIV).

This sequence belongs to the Lgt family.

Its subcellular location is the cell inner membrane. The catalysed reaction is L-cysteinyl-[prolipoprotein] + a 1,2-diacyl-sn-glycero-3-phospho-(1'-sn-glycerol) = an S-1,2-diacyl-sn-glyceryl-L-cysteinyl-[prolipoprotein] + sn-glycerol 1-phosphate + H(+). Its pathway is protein modification; lipoprotein biosynthesis (diacylglyceryl transfer). In terms of biological role, catalyzes the transfer of the diacylglyceryl group from phosphatidylglycerol to the sulfhydryl group of the N-terminal cysteine of a prolipoprotein, the first step in the formation of mature lipoproteins. The chain is Phosphatidylglycerol--prolipoprotein diacylglyceryl transferase from Borreliella burgdorferi (strain ZS7) (Borrelia burgdorferi).